A 117-amino-acid chain; its full sequence is Biogenesis of lysosome-related organelles complex 1 subunit BLS1 (117 aa).

The segment at 97–117 (EGKAQDTEQAPGKGDRIFRSD) is disordered.

This sequence belongs to the BLOC1S1 family. As to quaternary structure, component of the biogenesis of lysosome-related organelles complex-1 (BLOC-1).

Its subcellular location is the endosome. Component of the biogenesis of lysosome-related organelles complex-1 (BLOC-1), a complex involved in endosomal cargo sorting. This is Biogenesis of lysosome-related organelles complex 1 subunit BLS1 (BLS1) from Eremothecium gossypii (strain ATCC 10895 / CBS 109.51 / FGSC 9923 / NRRL Y-1056) (Yeast).